Here is a 447-residue protein sequence, read N- to C-terminus: MVKKLYIKTNGCQMNEYDSSKMAEVLYASHGLVKTDQVEDADVILLNTCSIREKAQEKVFSQLGQWREYKAKNPHVLIGVGGCVASQEGSDIIKRAPFVDIVFGPQTLHRLPALLNERLEKNKSVVDISFPEIEKFDHLPAPRAEGPTAFVSIMEGCSKYCSFCVVPYTRGEEISRPFDDVLAECYQLASQGVREINLLGQNVNDYRGIMDNGDIADLALLIHYIAAIDGIGRIRFTTSHPLAFSENLINAYAEVPELANHLHLPVQSGSDRILSLMKRGYTALEFKSKIRKLRKIRPDIRLSTDIIVGFPGETDKDFQDTMDLVHEIGFDTSFSFIYSPRPGTPAANLPDDTPMEIKKQRLQILQNRLLMNAARYSESMIGSKQKILVTGFSKKSSQQLSGRTECNRVVNFDGPPHLIGQFIDVQISDALPNSLRGRLLEKEMQPA.

An MTTase N-terminal domain is found at 3–120 (KKLYIKTNGC…LPALLNERLE (118 aa)). [4Fe-4S] cluster-binding residues include C12, C49, C83, C157, C161, and C164. In terms of domain architecture, Radical SAM core spans 143-375 (RAEGPTAFVS…QNRLLMNAAR (233 aa)). The TRAM domain occupies 378-441 (ESMIGSKQKI…PNSLRGRLLE (64 aa)).

This sequence belongs to the methylthiotransferase family. MiaB subfamily. Monomer. [4Fe-4S] cluster serves as cofactor.

It localises to the cytoplasm. It carries out the reaction N(6)-dimethylallyladenosine(37) in tRNA + (sulfur carrier)-SH + AH2 + 2 S-adenosyl-L-methionine = 2-methylsulfanyl-N(6)-dimethylallyladenosine(37) in tRNA + (sulfur carrier)-H + 5'-deoxyadenosine + L-methionine + A + S-adenosyl-L-homocysteine + 2 H(+). Functionally, catalyzes the methylthiolation of N6-(dimethylallyl)adenosine (i(6)A), leading to the formation of 2-methylthio-N6-(dimethylallyl)adenosine (ms(2)i(6)A) at position 37 in tRNAs that read codons beginning with uridine. This chain is tRNA-2-methylthio-N(6)-dimethylallyladenosine synthase, found in Legionella pneumophila (strain Paris).